Consider the following 703-residue polypeptide: DNA ligase (703 aa).

NAD(+) is bound by residues 44–48 (DAEYD), 93–94 (SL), and Glu-127. The active-site N6-AMP-lysine intermediate is the Lys-129. NAD(+)-binding residues include Arg-150, Glu-186, Lys-302, and Lys-326. Residues Cys-420, Cys-422, Cys-444, and Cys-450 each contribute to the Zn(2+) site. Residues 625–703 (VADSPVAGKT…EDMWFQRIGA (79 aa)) enclose the BRCT domain.

This sequence belongs to the NAD-dependent DNA ligase family. LigA subfamily. Requires Mg(2+) as cofactor. The cofactor is Mn(2+).

It catalyses the reaction NAD(+) + (deoxyribonucleotide)n-3'-hydroxyl + 5'-phospho-(deoxyribonucleotide)m = (deoxyribonucleotide)n+m + AMP + beta-nicotinamide D-nucleotide.. Its function is as follows. DNA ligase that catalyzes the formation of phosphodiester linkages between 5'-phosphoryl and 3'-hydroxyl groups in double-stranded DNA using NAD as a coenzyme and as the energy source for the reaction. It is essential for DNA replication and repair of damaged DNA. The chain is DNA ligase from Chelativorans sp. (strain BNC1).